Reading from the N-terminus, the 214-residue chain is 3-demethoxyubiquinol 3-hydroxylase (214 aa).

Fe cation is bound by residues E63, E93, H96, E145, E177, and H180.

The protein belongs to the COQ7 family. Fe cation serves as cofactor.

The protein localises to the cell membrane. It carries out the reaction a 5-methoxy-2-methyl-3-(all-trans-polyprenyl)benzene-1,4-diol + AH2 + O2 = a 3-demethylubiquinol + A + H2O. The protein operates within cofactor biosynthesis; ubiquinone biosynthesis. Its function is as follows. Catalyzes the hydroxylation of 2-nonaprenyl-3-methyl-6-methoxy-1,4-benzoquinol during ubiquinone biosynthesis. This Psychrobacter cryohalolentis (strain ATCC BAA-1226 / DSM 17306 / VKM B-2378 / K5) protein is 3-demethoxyubiquinol 3-hydroxylase.